The chain runs to 438 residues: Alpha-methylserine aldolase (438 aa).

The residue at position 252 (Lys-252) is an N6-(pyridoxal phosphate)lysine.

Belongs to the SHMT family. Alpha-methylserine aldolase subfamily. In terms of assembly, homodimer. The cofactor is pyridoxal 5'-phosphate.

The catalysed reaction is 2-methyl-L-serine = formaldehyde + L-alanine. With respect to regulation, in the alpha-methyl-L-serine synthesis reaction, activity is inhibited by an excess amount of formaldehyde (at a concentration greater than 10 mM). Catalyzes the reversible interconversion of alpha-methyl-L-serine to L-alanine and formaldehyde. Cannot use alpha-methyl-D-serine, L-serine or D-serine. Cannot use D-alanine instead of L-alanine as the substrate for alpha-methyl-L-serine synthesis. Does not require tetrahydrofolate (THF) for activity. This chain is Alpha-methylserine aldolase, found in Ralstonia sp.